Here is a 119-residue protein sequence, read N- to C-terminus: Beta-2-microglobulin (119 aa).

Positions 1-20 are cleaved as a signal peptide; that stretch reads MARFVVAALLVLLCLSGLEA. Residues 25–114 form the Ig-like C1-type domain; the sequence is PKIQVYSRHP…VTFPTPKTVK (90 aa). Cysteines 45 and 100 form a disulfide.

The protein belongs to the beta-2-microglobulin family. In terms of assembly, heterodimer of an alpha chain and a beta chain. Beta-2-microglobulin is the beta-chain of major histocompatibility complex class I molecules.

The protein localises to the secreted. Component of the class I major histocompatibility complex (MHC). Involved in the presentation of peptide antigens to the immune system. The sequence is that of Beta-2-microglobulin (B2M) from Cebus albifrons (White-fronted capuchin).